The sequence spans 160 residues: Endoribonuclease YbeY (160 aa).

Residues His-112, His-116, and His-122 each contribute to the Zn(2+) site. The tract at residues Glu-141–Lys-160 is disordered.

This sequence belongs to the endoribonuclease YbeY family. Requires Zn(2+) as cofactor.

The protein resides in the cytoplasm. Single strand-specific metallo-endoribonuclease involved in late-stage 70S ribosome quality control and in maturation of the 3' terminus of the 16S rRNA. This is Endoribonuclease YbeY from Pseudomonas aeruginosa (strain UCBPP-PA14).